Reading from the N-terminus, the 607-residue chain is Nexilin (607 aa).

A compositionally biased stretch (basic and acidic residues) spans 1-14; it reads MNDVSQKAEIKEML. 2 disordered regions span residues 1 to 143 and 165 to 268; these read MNDV…EDKM and ETEA…RRRI. Phosphoserine is present on Ser16. 4 stretches are compositionally biased toward basic and acidic residues: residues 40–85, 120–143, 167–221, and 228–268; these read GKFD…RAEQ, KTKD…EDKM, EAKK…HMVN, and DRET…RRRI. A Phosphoserine modification is found at Ser172. Phosphoserine occurs at positions 281, 288, and 296. The residue at position 301 (Thr301) is a Phosphothreonine. 2 disordered regions span residues 419–444 and 480–514; these read NFHE…KVNM and AALQ…GAPW. Phosphoserine is present on residues Ser495 and Ser500. Thr502 is modified (phosphothreonine). One can recognise an Ig-like domain in the interval 513–601; the sequence is PWFKKPLRNT…GSAASTCILT (89 aa).

Interacts with F-actin.

It is found in the cytoplasm. The protein localises to the cytoskeleton. It localises to the cell junction. The protein resides in the adherens junction. Its subcellular location is the myofibril. It is found in the sarcomere. The protein localises to the z line. Its function is as follows. Involved in regulating cell migration through association with the actin cytoskeleton. Has an essential role in the maintenance of Z line and sarcomere integrity. The protein is Nexilin of Mus musculus (Mouse).